A 161-amino-acid polypeptide reads, in one-letter code: Nucleotide-binding protein Ssed_3443 (161 aa).

The protein belongs to the YajQ family.

Functionally, nucleotide-binding protein. The protein is Nucleotide-binding protein Ssed_3443 of Shewanella sediminis (strain HAW-EB3).